The sequence spans 61 residues: U-stichotoxin-Hcr1b (61 aa).

An N-terminal signal peptide occupies residues Pro-1–Ser-19. The propeptide occupies Ile-20 to Pro-31. Disulfide bonds link Cys-38/Cys-49 and Cys-41/Cys-56.

The protein belongs to the Hau1a/HC18/HC19 family.

It localises to the secreted. The protein resides in the nematocyst. Functionally, toxin that is lethal to crab. Does not produce the typical symptoms associated with sodium channel toxins in crabs, suggesting that it likely does not act on sodium channels. The polypeptide is U-stichotoxin-Hcr1b (Radianthus crispa (Leathery sea anemone)).